Here is a 432-residue protein sequence, read N- to C-terminus: Adenylosuccinate synthetase (432 aa).

Residues glycine 13–lysine 19 and glycine 41–threonine 43 each bind GTP. The Proton acceptor role is filled by aspartate 14. The Mg(2+) site is built by aspartate 14 and glycine 41. Residues aspartate 14–lysine 17, asparagine 39–histidine 42, threonine 130, arginine 144, glutamine 225, threonine 240, and arginine 304 contribute to the IMP site. Histidine 42 functions as the Proton donor in the catalytic mechanism. Residue alanine 300–arginine 306 coordinates substrate. GTP-binding positions include arginine 306, lysine 332–aspartate 334, and serine 415–glycine 417.

This sequence belongs to the adenylosuccinate synthetase family. Homodimer. Requires Mg(2+) as cofactor.

The protein localises to the cytoplasm. It catalyses the reaction IMP + L-aspartate + GTP = N(6)-(1,2-dicarboxyethyl)-AMP + GDP + phosphate + 2 H(+). It functions in the pathway purine metabolism; AMP biosynthesis via de novo pathway; AMP from IMP: step 1/2. Its function is as follows. Plays an important role in the de novo pathway of purine nucleotide biosynthesis. Catalyzes the first committed step in the biosynthesis of AMP from IMP. The chain is Adenylosuccinate synthetase from Salmonella arizonae (strain ATCC BAA-731 / CDC346-86 / RSK2980).